The following is a 199-amino-acid chain: Probable thymidylate kinase (199 aa).

9–16 is an ATP binding site; sequence GIDGCGKT.

It belongs to the thymidylate kinase family.

It carries out the reaction dTMP + ATP = dTDP + ADP. This is Probable thymidylate kinase from Methanococcus maripaludis (strain DSM 14266 / JCM 13030 / NBRC 101832 / S2 / LL).